The primary structure comprises 651 residues: Threonine--tRNA ligase (651 aa).

Positions 1–64 (MSSVVHVTLP…EKDCTLQVLT (64 aa)) constitute a TGS domain. Residues 245 to 535 (DHRRLGPELG…LTEHYAGNFP (291 aa)) form a catalytic region. The Zn(2+) site is built by cysteine 336, histidine 387, and histidine 512.

It belongs to the class-II aminoacyl-tRNA synthetase family. In terms of assembly, homodimer. It depends on Zn(2+) as a cofactor.

The protein resides in the cytoplasm. The catalysed reaction is tRNA(Thr) + L-threonine + ATP = L-threonyl-tRNA(Thr) + AMP + diphosphate + H(+). Catalyzes the attachment of threonine to tRNA(Thr) in a two-step reaction: L-threonine is first activated by ATP to form Thr-AMP and then transferred to the acceptor end of tRNA(Thr). Also edits incorrectly charged L-seryl-tRNA(Thr). The sequence is that of Threonine--tRNA ligase from Symbiobacterium thermophilum (strain DSM 24528 / JCM 14929 / IAM 14863 / T).